A 126-amino-acid chain; its full sequence is Glycine cleavage system H protein (126 aa).

The region spanning 22-104 (TVTIGVTDFA…YGEGWMIKIK (83 aa)) is the Lipoyl-binding domain. At Lys-63 the chain carries N6-lipoyllysine.

The protein belongs to the GcvH family. In terms of assembly, the glycine cleavage system is composed of four proteins: P, T, L and H. It depends on (R)-lipoate as a cofactor.

In terms of biological role, the glycine cleavage system catalyzes the degradation of glycine. The H protein shuttles the methylamine group of glycine from the P protein to the T protein. This chain is Glycine cleavage system H protein, found in Christiangramia forsetii (strain DSM 17595 / CGMCC 1.15422 / KT0803) (Gramella forsetii).